Consider the following 248-residue polypeptide: Probable transcriptional regulatory protein M446_6579 (248 aa).

Belongs to the TACO1 family.

Its subcellular location is the cytoplasm. The chain is Probable transcriptional regulatory protein M446_6579 from Methylobacterium sp. (strain 4-46).